We begin with the raw amino-acid sequence, 486 residues long: Transcription factor VOZ1 (486 aa).

Positions 208-405 are VOZ; sequence PPSAFLGPKC…VDGKKTSKGK (198 aa). Cys-217, Cys-222, Cys-236, and His-240 together coordinate Zn(2+). The C3H1-type; atypical zinc finger occupies 217-240; that stretch reads CALWDCPRPAQGFDWFQDYCSSFH. Residues 424–445 form a disordered region; the sequence is EFPPENNTTNTTNNNKRCIKGR. Over residues 429–438 the composition is skewed to low complexity; the sequence is NNTTNTTNNN.

In terms of assembly, homodimer. Interacts with phytochrome B (phyB). As to expression, ubiquitous. Expressed in the vascular bundles of various tissues, specifically in the phloem.

The protein localises to the cytoplasm. The protein resides in the nucleus. In terms of biological role, transcriptional activator acting positively in the phytochrome B signaling pathway. Functions redundantly with VOZ2 to promote flowering downstream of phytochrome B (phyB). Down-regulates 'FLOWERING LOCUS C' (FLC) and up-regulates 'FLOWERING LOCUS T' (FT). Binds to the 38-bp cis-acting region of the AVP1 gene. Interacts with phyB in the cytoplasm and is translocated to the nucleus at signal transmission, where it is subjected to degradation in a phytochrome-dependent manner. The chain is Transcription factor VOZ1 (VOZ1) from Arabidopsis thaliana (Mouse-ear cress).